A 161-amino-acid polypeptide reads, in one-letter code: Phosphotransferase enzyme IIB component GlvB (161 aa).

Residues 10-32 (LTQIAIGLCFTLLYFVVFRTLIL) traverse the membrane as a helical segment. A PTS EIIB type-1 domain is found at 70–152 (LDQAAGILQA…DSLINSHQSA (83 aa)). Cys92 serves as the catalytic Phosphocysteine intermediate.

It is found in the cell inner membrane. Its function is as follows. The phosphoenolpyruvate-dependent sugar phosphotransferase system (sugar PTS), a major carbohydrate active -transport system, catalyzes the phosphorylation of incoming sugar substrates concomitantly with their translocation across the cell membrane. This operon may be cryptic in wild-type K12 strains. This Escherichia coli (strain K12) protein is Phosphotransferase enzyme IIB component GlvB.